The chain runs to 692 residues: MLKYAWQSGPKQRNRWLWHLSNQIWKRSYSSKIRNIGILAHIDAGKTTTTERMLFYAGKTRALGEVHRGNTVTDYLTQERERGITICSSAVTFPWNDHRINLLDTPGHIDFTMEVEQSLYAVDGVVVVLDGTAGVEAQTVTVWSQADKHKLPRLIFVNKMDRPDADFEKCVSDLKDKLETQPVCLQYPVKNDDGVLAINDVITLERLSWQKKDLGRSYRNVKLEPSDDLRVLQEKRNELIDQLSGLDDELADVVISTESFDNVDNALIERALRRATAQQKVVPVLLGSAYKNVGIQRLMDAVNAYLPAPEERNQIYDCFGGEIKRGMRLISARGQAEVVSKLYEPLADEYREVGAVQSGDVVICAGLKSTVTGDLLTSTEEDDELDESAELFAIDPQIPDAVYFCSIEPPSVSSQTAMEQALKQLQREDPSLRVSYDSVTGQTVLGGMGELHMDIIKSRILSDYKIDVDLGPLQIAYKETIEAPALTTQSVEKEIAGSKQSVSITLEVVKNQAELFSLDKSPENLPNLNTLRPRILQVLRKGSISALERGPRVGGQVVETQIRLHNATIGRGTADSFVMATAAQCVQKLLSTSGTRLLEPIMALQIVAPSERISGIIADLSRRRALINDVLPKGERNKMILVNAPLAELSGYSSALRTISSGTGSMTMQPCGFSSMNSVDESLAERRAQGLE.

A mitochondrion-targeting transit peptide spans 1–29 (MLKYAWQSGPKQRNRWLWHLSNQIWKRSY). Residues 31-310 (SKIRNIGILA…AVNAYLPAPE (280 aa)) form the tr-type G domain. GTP contacts are provided by residues 40–47 (AHIDAGKT), 104–108 (DTPGH), and 158–161 (NKMD).

Belongs to the TRAFAC class translation factor GTPase superfamily. Classic translation factor GTPase family. EF-G/EF-2 subfamily.

The protein localises to the mitochondrion. In terms of biological role, mitochondrial GTPase that mediates the disassembly of ribosomes from messenger RNA at the termination of mitochondrial protein biosynthesis. Not involved in the GTP-dependent ribosomal translocation step during translation elongation. The sequence is that of Ribosome-releasing factor 2, mitochondrial from Drosophila sechellia (Fruit fly).